A 398-amino-acid chain; its full sequence is Basic helix-loop-helix neural transcription factor TAP (398 aa).

2 disordered regions span residues 35 to 59 and 102 to 144; these read ETEA…IPQP and RATN…RSRS. Over residues 127–141 the composition is skewed to basic residues; sequence RPKRKYAVGKNRVTR. In terms of domain architecture, bHLH spans 154 to 206; it reads FRRMKANDRERNRMHNLNDALEKLRVTLPSLPEETKLTKIEILRFAHNYIFAL. Disordered regions lie at residues 265–333 and 361–398; these read AQHQ…QQFS and QQSS…APQV. The span at 307 to 333 shows a compositional bias: low complexity; it reads HQQQQQPHQPHHLQPNPQQESSPQQFS. Positions 361–370 are enriched in polar residues; sequence QQSSFYSQTP.

In terms of tissue distribution, expressed in neuronal and glial precursors during differentiation. In the peripheral nervous system, expression is exclusively in one of the neurons that innervate each larval chemosensory organ. Expressed at a late stage in the development of one type of adult chemosensory organ, the gustatory bristles of the leg, wing and proboscis. Expressed very early in the development of a second type of chemosensory receptors, the olfactory organs of the antenna.

It is found in the nucleus. May play a role in the specification of the sugar-sensitive adult gustatory neuron and affect the response to sugar and salt. Regulated by POXN. The chain is Basic helix-loop-helix neural transcription factor TAP (tap) from Drosophila melanogaster (Fruit fly).